Here is a 328-residue protein sequence, read N- to C-terminus: Phosphatidylglycerol--prolipoprotein diacylglyceryl transferase (328 aa).

3 helical membrane-spanning segments follow: residues 15-35 (VIQG…ILIS), 58-78 (FMFS…TLVY), and 106-126 (GMAI…IINT). Residue Arg-156 coordinates a 1,2-diacyl-sn-glycero-3-phospho-(1'-sn-glycerol). 2 consecutive transmembrane segments (helical) span residues 242-262 (GFIF…IEYL) and 289-309 (ISMG…WVVV).

The protein belongs to the Lgt family.

It localises to the cell inner membrane. It catalyses the reaction L-cysteinyl-[prolipoprotein] + a 1,2-diacyl-sn-glycero-3-phospho-(1'-sn-glycerol) = an S-1,2-diacyl-sn-glyceryl-L-cysteinyl-[prolipoprotein] + sn-glycerol 1-phosphate + H(+). It functions in the pathway protein modification; lipoprotein biosynthesis (diacylglyceryl transfer). Its function is as follows. Catalyzes the transfer of the diacylglyceryl group from phosphatidylglycerol to the sulfhydryl group of the N-terminal cysteine of a prolipoprotein, the first step in the formation of mature lipoproteins. This chain is Phosphatidylglycerol--prolipoprotein diacylglyceryl transferase, found in Borrelia garinii subsp. bavariensis (strain ATCC BAA-2496 / DSM 23469 / PBi) (Borreliella bavariensis).